Reading from the N-terminus, the 476-residue chain is Siroheme synthase (476 aa).

The tract at residues 1–207 (MTANALFPLF…QRHAEAEAVL (207 aa)) is precorrin-2 dehydrogenase /sirohydrochlorin ferrochelatase. NAD(+)-binding positions include 25–26 (KV) and 46–47 (PS). S132 carries the post-translational modification Phosphoserine. Positions 220–476 (GSVTLVGAGA…SAPCPPARIL (257 aa)) are uroporphyrinogen-III C-methyltransferase. D252 acts as the Proton acceptor in catalysis. The active-site Proton donor is K274. S-adenosyl-L-methionine contacts are provided by residues 305 to 307 (GGD), V310, 335 to 336 (TA), M387, and G416.

This sequence in the N-terminal section; belongs to the precorrin-2 dehydrogenase / sirohydrochlorin ferrochelatase family. It in the C-terminal section; belongs to the precorrin methyltransferase family.

It carries out the reaction uroporphyrinogen III + 2 S-adenosyl-L-methionine = precorrin-2 + 2 S-adenosyl-L-homocysteine + H(+). The enzyme catalyses precorrin-2 + NAD(+) = sirohydrochlorin + NADH + 2 H(+). The catalysed reaction is siroheme + 2 H(+) = sirohydrochlorin + Fe(2+). The protein operates within cofactor biosynthesis; adenosylcobalamin biosynthesis; precorrin-2 from uroporphyrinogen III: step 1/1. It functions in the pathway cofactor biosynthesis; adenosylcobalamin biosynthesis; sirohydrochlorin from precorrin-2: step 1/1. Its pathway is porphyrin-containing compound metabolism; siroheme biosynthesis; precorrin-2 from uroporphyrinogen III: step 1/1. It participates in porphyrin-containing compound metabolism; siroheme biosynthesis; siroheme from sirohydrochlorin: step 1/1. The protein operates within porphyrin-containing compound metabolism; siroheme biosynthesis; sirohydrochlorin from precorrin-2: step 1/1. In terms of biological role, multifunctional enzyme that catalyzes the SAM-dependent methylations of uroporphyrinogen III at position C-2 and C-7 to form precorrin-2 via precorrin-1. Then it catalyzes the NAD-dependent ring dehydrogenation of precorrin-2 to yield sirohydrochlorin. Finally, it catalyzes the ferrochelation of sirohydrochlorin to yield siroheme. This chain is Siroheme synthase, found in Xylella fastidiosa (strain M12).